The primary structure comprises 366 residues: MLEKRYLVLEDGSYYEGYRLGSDDLSIGEIVFNTAMTGYQETISDPSYTGQIITFTYPLIGNYGINRDDFESLTPKLNGVVVKEASTHPSNFRHQKTLHETLAQYHIPGISGVDTRSITRKIRNYGVLRAGFTDNKDNIQELVEQLKTAELPRDEVQTVSTKTPYVSTGSDLSVVLLDFGKKQNIVRELNLRGCNVTVVPYDTSAEEILGMSPDGVMLSNGPGDPDEVDVALDMIRGILGKIPFFGICLGHQLFALSQGATSFKMKFGHRGANHPVKDLRTGKIDITSQNHGYSIDCDSLKNTDLEVTHIALNDGTVEGLRHKELPAFSVQYHPEARPGPSDSNYLFDEFIAMMKDFKEKERQINA.

Residues Met1 to Asp171 form a CPSase region. L-glutamine-binding residues include Ser47, Gly221, and Gly223. The 188-residue stretch at Ser173–Lys360 folds into the Glutamine amidotransferase type-1 domain. Cys248 functions as the Nucleophile in the catalytic mechanism. L-glutamine-binding residues include Leu249, Gln252, Asn290, Gly292, and Tyr293. Catalysis depends on residues His333 and Glu335.

It belongs to the CarA family. As to quaternary structure, composed of two chains; the small (or glutamine) chain promotes the hydrolysis of glutamine to ammonia, which is used by the large (or ammonia) chain to synthesize carbamoyl phosphate. Tetramer of heterodimers (alpha,beta)4.

The catalysed reaction is hydrogencarbonate + L-glutamine + 2 ATP + H2O = carbamoyl phosphate + L-glutamate + 2 ADP + phosphate + 2 H(+). It carries out the reaction L-glutamine + H2O = L-glutamate + NH4(+). It functions in the pathway amino-acid biosynthesis; L-arginine biosynthesis; carbamoyl phosphate from bicarbonate: step 1/1. It participates in pyrimidine metabolism; UMP biosynthesis via de novo pathway; (S)-dihydroorotate from bicarbonate: step 1/3. Functionally, small subunit of the glutamine-dependent carbamoyl phosphate synthetase (CPSase). CPSase catalyzes the formation of carbamoyl phosphate from the ammonia moiety of glutamine, carbonate, and phosphate donated by ATP, constituting the first step of 2 biosynthetic pathways, one leading to arginine and/or urea and the other to pyrimidine nucleotides. The small subunit (glutamine amidotransferase) binds and cleaves glutamine to supply the large subunit with the substrate ammonia. This chain is Carbamoyl phosphate synthase small chain, found in Staphylococcus epidermidis (strain ATCC 12228 / FDA PCI 1200).